Reading from the N-terminus, the 166-residue chain is Co-chaperone protein HscB homolog (166 aa).

The J domain occupies 3 to 75; the sequence is QYFTLFRIEP…IDRAAYLLKT (73 aa).

The protein belongs to the HscB family. As to quaternary structure, interacts with HscA and stimulates its ATPase activity.

Its function is as follows. Co-chaperone involved in the maturation of iron-sulfur cluster-containing proteins. Seems to help targeting proteins to be folded toward HscA. This Neisseria meningitidis serogroup A / serotype 4A (strain DSM 15465 / Z2491) protein is Co-chaperone protein HscB homolog.